A 344-amino-acid chain; its full sequence is Phosphate acyltransferase (344 aa).

This sequence belongs to the PlsX family. As to quaternary structure, homodimer. Probably interacts with PlsY.

It localises to the cytoplasm. It catalyses the reaction a fatty acyl-[ACP] + phosphate = an acyl phosphate + holo-[ACP]. Its pathway is lipid metabolism; phospholipid metabolism. Functionally, catalyzes the reversible formation of acyl-phosphate (acyl-PO(4)) from acyl-[acyl-carrier-protein] (acyl-ACP). This enzyme utilizes acyl-ACP as fatty acyl donor, but not acyl-CoA. This Cronobacter sakazakii (strain ATCC BAA-894) (Enterobacter sakazakii) protein is Phosphate acyltransferase.